The primary structure comprises 1047 residues: FACT complex subunit SPT16 (1047 aa).

Ala-2 bears the N-acetylalanine mark. The residue at position 139 (Lys-139) is an N6-acetyllysine. Residue Ser-188 is modified to Phosphoserine. Residues Lys-196 and Lys-223 each carry the N6-acetyllysine modification. The residue at position 455 (Ser-455) is a Phosphoserine. A coiled-coil region spans residues 465–507 (RNEMTAEEKRRAHQKELAAQLNEEAKRRLTEQKGEQQIQKARK). A disordered region spans residues 491 to 518 (RRLTEQKGEQQIQKARKSNVSYKNPSLM). Lys-497 is covalently cross-linked (Glycyl lysine isopeptide (Lys-Gly) (interchain with G-Cter in SUMO2)). Over residues 499-514 (EQQIQKARKSNVSYKN) the composition is skewed to polar residues. Ser-508 is modified (phosphoserine). An N6-acetyllysine; alternate modification is found at Lys-513. Residue Lys-513 forms a Glycyl lysine isopeptide (Lys-Gly) (interchain with G-Cter in SUMO2); alternate linkage. Lys-647 participates in a covalent cross-link: Glycyl lysine isopeptide (Lys-Gly) (interchain with G-Cter in SUMO2). Phosphoserine is present on residues Ser-650 and Ser-658. N6-acetyllysine occurs at positions 732 and 786. Thr-903 is subject to Phosphothreonine. N6-acetyllysine is present on Lys-904. A disordered region spans residues 918-1047 (EQGGWSFLEP…SSAPPKKKRK (130 aa)). The segment covering 927–973 (PEGEGSDAEDGDSESEIEDETFNPSEDDYEEEEEDSDEDYSSEAEES) has biased composition (acidic residues). 4 positions are modified to phosphoserine: Ser-979, Ser-982, Ser-986, and Ser-1015. Residues 985 to 1005 (ESGKDWDELEEEARKADRESR) are compositionally biased toward basic and acidic residues. Over residues 1024–1039 (VHSSGRGSNRGSRHSS) the composition is skewed to low complexity.

This sequence belongs to the peptidase M24 family. SPT16 subfamily. In terms of assembly, interacts with MYOG (via C-terminal region). Component of the FACT complex, a stable heterodimer of SSRP1 and SUPT16H. Also a component of a CK2-SPT16-SSRP1 complex which forms following UV irradiation, composed of SSRP1, SUPT16H, CSNK2A1, CSNK2A2 and CSNK2B. Interacts with NEK9. Binds to histone H2A-H2B. Identified in a centromere complex containing histones H2A, H2B and H4, and at least CENPA, CENPB, CENPC, CENPT, CENPN, HJURP, SUPT16H, SSRP1 and RSF1. Interacts with GTF2E2. In terms of processing, ADP-ribosylated. ADP-ribosylation by PARP1 is induced by genotoxic stress and correlates with dissociation of FACT from chromatin. As to expression, widely expressed. Expressed in brain, liver, heart, kidneys, lungs, spleen, thymus, ovary, and testes, with highest levels of expression observed in thymus.

It localises to the nucleus. It is found in the chromosome. In terms of biological role, component of the FACT complex, a general chromatin factor that acts to reorganize nucleosomes. The FACT complex is involved in multiple processes that require DNA as a template such as mRNA elongation, DNA replication and DNA repair. During transcription elongation the FACT complex acts as a histone chaperone that both destabilizes and restores nucleosomal structure. It facilitates the passage of RNA polymerase II and transcription by promoting the dissociation of one histone H2A-H2B dimer from the nucleosome, then subsequently promotes the reestablishment of the nucleosome following the passage of RNA polymerase II. The FACT complex is probably also involved in phosphorylation of 'Ser-392' of p53/TP53 via its association with CK2 (casein kinase II). The protein is FACT complex subunit SPT16 (Supt16h) of Mus musculus (Mouse).